A 252-amino-acid chain; its full sequence is HTH-type transcriptional regulator XynR (252 aa).

The region spanning 4–66 (IQSVERALQI…PENGKYRLGM (63 aa)) is the HTH iclR-type domain. The segment at residues 25–45 (KITDISKLMGLSKSTLHSLLK) is a DNA-binding region (H-T-H motif). The IclR-ED domain maps to 81 to 250 (IRQKAKGWLT…GLALSRALGY (170 aa)).

Its activity is regulated as follows. Activity may be controlled by xylonate. Involved in regulation of xylonate catabolism. Represses the expression of both yagA and yagEF operons. Binds mainly at a single site within the spacer of the bidirectional transcription units yagA and yagEF. This is HTH-type transcriptional regulator XynR from Escherichia coli (strain K12).